A 140-amino-acid polypeptide reads, in one-letter code: Secreted RxLR effector protein 37 (140 aa).

The first 22 residues, 1 to 22, serve as a signal peptide directing secretion; the sequence is MTYRLPFVAVILFVTAKHVVLA. The RxLR-dEER motif lies at 57–76; the sequence is RFLRQLEKKPGVNDKRDEER.

It belongs to the RxLR effector family.

The protein localises to the secreted. It localises to the host nucleus. It is found in the host cytoplasm. In terms of biological role, secreted effector that completely suppresses the host cell death induced by cell death-inducing proteins. This is Secreted RxLR effector protein 37 from Plasmopara viticola (Downy mildew of grapevine).